The chain runs to 228 residues: Sec-independent protein translocase protein TatB (228 aa).

Residues 1-21 (MFDFGLGELVFVGIIALIVLG) form a helical membrane-spanning segment. Disordered regions lie at residues 138–162 (RSYA…AETD) and 195–228 (PVPH…VRKS). Positions 206–228 (AISRKRDLRPKSRAKPKLRVRKS) are enriched in basic residues.

Belongs to the TatB family. In terms of assembly, the Tat system comprises two distinct complexes: a TatABC complex, containing multiple copies of TatA, TatB and TatC subunits, and a separate TatA complex, containing only TatA subunits. Substrates initially bind to the TatABC complex, which probably triggers association of the separate TatA complex to form the active translocon.

Its subcellular location is the cell inner membrane. Functionally, part of the twin-arginine translocation (Tat) system that transports large folded proteins containing a characteristic twin-arginine motif in their signal peptide across membranes. Together with TatC, TatB is part of a receptor directly interacting with Tat signal peptides. TatB may form an oligomeric binding site that transiently accommodates folded Tat precursor proteins before their translocation. This is Sec-independent protein translocase protein TatB from Neisseria meningitidis serogroup A / serotype 4A (strain DSM 15465 / Z2491).